The primary structure comprises 62 residues: Photosystem II reaction center protein Z (62 aa).

Transmembrane regions (helical) follow at residues 8-28 (ALAA…VAYA) and 41-61 (FLGS…NFLV).

The protein belongs to the PsbZ family. PSII is composed of 1 copy each of membrane proteins PsbA, PsbB, PsbC, PsbD, PsbE, PsbF, PsbH, PsbI, PsbJ, PsbK, PsbL, PsbM, PsbT, PsbX, PsbY, PsbZ, Psb30/Ycf12, peripheral proteins PsbO, CyanoQ (PsbQ), PsbU, PsbV and a large number of cofactors. It forms dimeric complexes.

It localises to the cellular thylakoid membrane. Functionally, may control the interaction of photosystem II (PSII) cores with the light-harvesting antenna, regulates electron flow through the 2 photosystem reaction centers. PSII is a light-driven water plastoquinone oxidoreductase, using light energy to abstract electrons from H(2)O, generating a proton gradient subsequently used for ATP formation. The sequence is that of Photosystem II reaction center protein Z from Cyanothece sp. (strain PCC 7425 / ATCC 29141).